The primary structure comprises 345 residues: Glycerol-3-phosphate dehydrogenase [NAD(P)+] (345 aa).

4 residues coordinate NADPH: Ser23, Tyr24, His44, and Lys118. Sn-glycerol 3-phosphate is bound by residues Lys118, Gly147, and Thr149. Ala151 contributes to the NADPH binding site. Positions 203, 256, 266, 267, and 268 each coordinate sn-glycerol 3-phosphate. The Proton acceptor role is filled by Lys203. NADPH is bound at residue Arg267. 2 residues coordinate NADPH: Val291 and Glu293.

The protein belongs to the NAD-dependent glycerol-3-phosphate dehydrogenase family.

The protein resides in the cytoplasm. The catalysed reaction is sn-glycerol 3-phosphate + NAD(+) = dihydroxyacetone phosphate + NADH + H(+). It carries out the reaction sn-glycerol 3-phosphate + NADP(+) = dihydroxyacetone phosphate + NADPH + H(+). The protein operates within membrane lipid metabolism; glycerophospholipid metabolism. Catalyzes the reduction of the glycolytic intermediate dihydroxyacetone phosphate (DHAP) to sn-glycerol 3-phosphate (G3P), the key precursor for phospholipid synthesis. The protein is Glycerol-3-phosphate dehydrogenase [NAD(P)+] of Vibrio campbellii (strain ATCC BAA-1116).